Reading from the N-terminus, the 129-residue chain is Small ribosomal subunit protein uS8 (129 aa).

The protein belongs to the universal ribosomal protein uS8 family. In terms of assembly, part of the 30S ribosomal subunit.

Its function is as follows. One of the primary rRNA binding proteins, it binds directly to 16S rRNA central domain where it helps coordinate assembly of the platform of the 30S subunit. This chain is Small ribosomal subunit protein uS8, found in Thermoplasma volcanium (strain ATCC 51530 / DSM 4299 / JCM 9571 / NBRC 15438 / GSS1).